Here is a 540-residue protein sequence, read N- to C-terminus: Membrane protein insertase YidC (540 aa).

Helical transmembrane passes span Met1 to Asp21, Asn351 to Thr371, Leu418 to Leu438, Ile464 to Ile484, and Pro497 to Ile517.

The protein belongs to the OXA1/ALB3/YidC family. Type 1 subfamily. In terms of assembly, interacts with the Sec translocase complex via SecD. Specifically interacts with transmembrane segments of nascent integral membrane proteins during membrane integration.

It localises to the cell membrane. Functionally, required for the insertion and/or proper folding and/or complex formation of integral membrane proteins into the membrane. Involved in integration of membrane proteins that insert both dependently and independently of the Sec translocase complex, as well as at least some lipoproteins. Aids folding of multispanning membrane proteins. This Wigglesworthia glossinidia brevipalpis protein is Membrane protein insertase YidC.